We begin with the raw amino-acid sequence, 442 residues long: Zuotin (442 aa).

The disordered stretch occupies residues 49–84 (RQRHGRTFSEDERLEVKNKVQEEVKEESEDEEEDPA). Threonine 55 is subject to Phosphothreonine. Positions 55-71 (TFSEDERLEVKNKVQEE) are enriched in basic and acidic residues. Phosphoserine is present on residues serine 57 and serine 76. A compositionally biased stretch (acidic residues) spans 72 to 83 (VKEESEDEEEDP). A J domain is found at 97–167 (DHYAVLGLSK…VRRRQFDSVD (71 aa)). Disordered regions lie at residues 242-270 (DGES…DNAR) and 306-331 (GARE…EAAA). A compositionally biased stretch (basic and acidic residues) spans 316 to 330 (KKKEEEERRAAEEAA).

In terms of assembly, RAC is a heterodimer of the Hsp70/DnaK-type chaperone ssz1 and the Hsp40/DnaJ-type chaperone zuo1. RAC associates with ribosomes via zuo1.

The protein resides in the cytoplasm. In terms of biological role, component of the ribosome-associated complex (RAC), a heterodimeric chaperone complex involved in regulation of accurate translation termination and in folding or maintaining nascent polypeptides in a folding-competent state. RAC stimulates the ATPase activity of the ribosome-associated pool of Hsp70-type chaperones SSB1/SSB2 that bind to the nascent polypeptide chain. The protein is Zuotin (zuo1) of Schizosaccharomyces pombe (strain 972 / ATCC 24843) (Fission yeast).